A 178-amino-acid polypeptide reads, in one-letter code: dCTP deaminase (178 aa).

DCTP is bound by residues 99 to 104 (RSTWAR) and Asp115. The active-site Proton donor/acceptor is the Glu125. Residues Tyr157 and Gln164 each coordinate dCTP.

The protein belongs to the dCTP deaminase family. Homotrimer.

It catalyses the reaction dCTP + H2O + H(+) = dUTP + NH4(+). It functions in the pathway pyrimidine metabolism; dUMP biosynthesis; dUMP from dCTP (dUTP route): step 1/2. Its function is as follows. Catalyzes the deamination of dCTP to dUTP. The chain is dCTP deaminase from Aeropyrum pernix (strain ATCC 700893 / DSM 11879 / JCM 9820 / NBRC 100138 / K1).